Here is a 397-residue protein sequence, read N- to C-terminus: Phosphoglycerate kinase (397 aa).

Substrate-binding positions include Asp25–Asn27, Arg41, His64–Arg67, Arg118, and Arg151. ATP is bound by residues Lys202, Glu324, and Gly350–Thr353.

This sequence belongs to the phosphoglycerate kinase family. In terms of assembly, monomer.

The protein resides in the cytoplasm. It carries out the reaction (2R)-3-phosphoglycerate + ATP = (2R)-3-phospho-glyceroyl phosphate + ADP. The protein operates within carbohydrate degradation; glycolysis; pyruvate from D-glyceraldehyde 3-phosphate: step 2/5. This Janthinobacterium sp. (strain Marseille) (Minibacterium massiliensis) protein is Phosphoglycerate kinase.